We begin with the raw amino-acid sequence, 189 residues long: Small ribosomal subunit protein uS5 (189 aa).

In terms of domain architecture, S5 DRBM spans Phe22–Val85.

The protein belongs to the universal ribosomal protein uS5 family. As to quaternary structure, part of the 30S ribosomal subunit. Contacts proteins S4 and S8.

Its function is as follows. With S4 and S12 plays an important role in translational accuracy. In terms of biological role, located at the back of the 30S subunit body where it stabilizes the conformation of the head with respect to the body. The sequence is that of Small ribosomal subunit protein uS5 from Sinorhizobium medicae (strain WSM419) (Ensifer medicae).